The following is a 208-amino-acid chain: Uracil phosphoribosyltransferase (208 aa).

Residues R78, R103, and 130 to 138 (DPMLATANS) each bind 5-phospho-alpha-D-ribose 1-diphosphate. Residues I193 and 198 to 200 (GDA) each bind uracil. D199 is a binding site for 5-phospho-alpha-D-ribose 1-diphosphate.

It belongs to the UPRTase family. It depends on Mg(2+) as a cofactor.

The enzyme catalyses UMP + diphosphate = 5-phospho-alpha-D-ribose 1-diphosphate + uracil. The protein operates within pyrimidine metabolism; UMP biosynthesis via salvage pathway; UMP from uracil: step 1/1. With respect to regulation, allosterically activated by GTP. In terms of biological role, catalyzes the conversion of uracil and 5-phospho-alpha-D-ribose 1-diphosphate (PRPP) to UMP and diphosphate. This chain is Uracil phosphoribosyltransferase, found in Brucella abortus biovar 1 (strain 9-941).